The sequence spans 406 residues: Putative cfxQ-like protein R730 (406 aa).

The tract at residues Met-1–Lys-37 is disordered. A compositionally biased stretch (low complexity) spans Asn-13–Pro-32. An ATP-binding site is contributed by Gly-173–Ser-180.

The protein belongs to the CbxX/CfxQ family.

The chain is Putative cfxQ-like protein R730 from Acanthamoeba polyphaga mimivirus (APMV).